Reading from the N-terminus, the 556-residue chain is Formate--tetrahydrofolate ligase (556 aa).

65 to 72 is an ATP binding site; it reads TPAGEGKS.

It belongs to the formate--tetrahydrofolate ligase family.

It catalyses the reaction (6S)-5,6,7,8-tetrahydrofolate + formate + ATP = (6R)-10-formyltetrahydrofolate + ADP + phosphate. The protein operates within one-carbon metabolism; tetrahydrofolate interconversion. The chain is Formate--tetrahydrofolate ligase from Clostridium acetobutylicum (strain ATCC 824 / DSM 792 / JCM 1419 / IAM 19013 / LMG 5710 / NBRC 13948 / NRRL B-527 / VKM B-1787 / 2291 / W).